The chain runs to 179 residues: Large ribosomal subunit protein uL5 (179 aa).

The protein belongs to the universal ribosomal protein uL5 family. As to quaternary structure, part of the 50S ribosomal subunit; part of the 5S rRNA/L5/L18/L25 subcomplex. Contacts the 5S rRNA and the P site tRNA. Forms a bridge to the 30S subunit in the 70S ribosome.

This is one of the proteins that bind and probably mediate the attachment of the 5S RNA into the large ribosomal subunit, where it forms part of the central protuberance. In the 70S ribosome it contacts protein S13 of the 30S subunit (bridge B1b), connecting the 2 subunits; this bridge is implicated in subunit movement. Contacts the P site tRNA; the 5S rRNA and some of its associated proteins might help stabilize positioning of ribosome-bound tRNAs. The protein is Large ribosomal subunit protein uL5 of Rickettsia akari (strain Hartford).